Reading from the N-terminus, the 682-residue chain is Methionine synthase reductase (682 aa).

Residues 4-147 (FLIAFGSQTG…EVEPWIEKFF (144 aa)) enclose the Flavodoxin-like domain. 93–124 (LLGLGDSNYSSYQTIPRKIDKQLTALGANRLF) is a binding site for FMN. One can recognise an FAD-binding FR-type domain in the interval 271-516 (TKPFEVLVVS…GKEPARFRLP (246 aa)). Lysine 293 serves as a coordination point for NADP(+). FAD is bound by residues 455–458 (RPYS) and 488–491 (GLAT). NADP(+) is bound by residues 607-609 (RVQ) and aspartate 643. Tryptophan 681 is an FAD binding site.

FAD serves as cofactor. Requires FMN as cofactor.

The catalysed reaction is 2 methylcob(III)alamin-[methionine synthase] + 2 S-adenosyl-L-homocysteine + NADP(+) + H(+) = 2 cob(II)alamin-[methionine synthase] + 2 S-adenosyl-L-methionine + NADPH. In terms of biological role, involved in the reductive regeneration of cob(I)alamin cofactor required for the maintenance of methionine synthase in a functional state. The sequence is that of Methionine synthase reductase from Caenorhabditis elegans.